Consider the following 74-residue polypeptide: Sec-independent protein translocase protein TatA (74 aa).

Residues 1-21 (MGGISIWQLLIIVAIVVLLFG) traverse the membrane as a helical segment. Residues 45–74 (EEPKDAEFKSLDKAENTAQTKKEEKEKEQA) are disordered.

The protein belongs to the TatA/E family. The Tat system comprises two distinct complexes: a TatABC complex, containing multiple copies of TatA, TatB and TatC subunits, and a separate TatA complex, containing only TatA subunits. Substrates initially bind to the TatABC complex, which probably triggers association of the separate TatA complex to form the active translocon.

The protein resides in the cell inner membrane. In terms of biological role, part of the twin-arginine translocation (Tat) system that transports large folded proteins containing a characteristic twin-arginine motif in their signal peptide across membranes. TatA could form the protein-conducting channel of the Tat system. The sequence is that of Sec-independent protein translocase protein TatA from Actinobacillus succinogenes (strain ATCC 55618 / DSM 22257 / CCUG 43843 / 130Z).